Here is a 64-residue protein sequence, read N- to C-terminus: UPF0434 protein BOV_A0835 (64 aa).

The protein belongs to the UPF0434 family.

This is UPF0434 protein BOV_A0835 from Brucella ovis (strain ATCC 25840 / 63/290 / NCTC 10512).